We begin with the raw amino-acid sequence, 88 residues long: Small ribosomal subunit protein uS17 (88 aa).

It belongs to the universal ribosomal protein uS17 family. In terms of assembly, part of the 30S ribosomal subunit.

Its function is as follows. One of the primary rRNA binding proteins, it binds specifically to the 5'-end of 16S ribosomal RNA. This chain is Small ribosomal subunit protein uS17, found in Maridesulfovibrio salexigens (strain ATCC 14822 / DSM 2638 / NCIMB 8403 / VKM B-1763) (Desulfovibrio salexigens).